The chain runs to 84 residues: MARENKKELIGKVVSDKMSKTIVVEIVQRKMHPIYHKYLKVSKKVKAHDEKEVSKVGDKVKIIEVRPISKDKRWALVEVLEKLK.

This sequence belongs to the universal ribosomal protein uS17 family. As to quaternary structure, part of the 30S ribosomal subunit.

Its function is as follows. One of the primary rRNA binding proteins, it binds specifically to the 5'-end of 16S ribosomal RNA. The polypeptide is Small ribosomal subunit protein uS17 (Borrelia garinii subsp. bavariensis (strain ATCC BAA-2496 / DSM 23469 / PBi) (Borreliella bavariensis)).